The primary structure comprises 308 residues: uncharacterized protein (308 aa).

Residues tyrosine 191 to valine 211 traverse the membrane as a helical segment.

It is found in the host membrane. This is an uncharacterized protein from Saccharolobus islandicus (Sulfolobus islandicus).